A 382-amino-acid polypeptide reads, in one-letter code: Succinate--CoA ligase [ADP-forming] subunit beta (382 aa).

The ATP-grasp domain maps to 9–240 (KELFAKYGVK…PRDITEFEAY (232 aa)). Residues Lys-45, 52–54 (GRG), Leu-94, and Glu-99 contribute to the ATP site. Positions 193 and 207 each coordinate Mg(2+). Substrate is bound by residues Asn-260 and 317 to 319 (GIT).

It belongs to the succinate/malate CoA ligase beta subunit family. As to quaternary structure, heterotetramer of two alpha and two beta subunits. The cofactor is Mg(2+).

It catalyses the reaction succinate + ATP + CoA = succinyl-CoA + ADP + phosphate. It carries out the reaction GTP + succinate + CoA = succinyl-CoA + GDP + phosphate. It functions in the pathway carbohydrate metabolism; tricarboxylic acid cycle; succinate from succinyl-CoA (ligase route): step 1/1. Succinyl-CoA synthetase functions in the citric acid cycle (TCA), coupling the hydrolysis of succinyl-CoA to the synthesis of either ATP or GTP and thus represents the only step of substrate-level phosphorylation in the TCA. The beta subunit provides nucleotide specificity of the enzyme and binds the substrate succinate, while the binding sites for coenzyme A and phosphate are found in the alpha subunit. The sequence is that of Succinate--CoA ligase [ADP-forming] subunit beta from Pyrobaculum calidifontis (strain DSM 21063 / JCM 11548 / VA1).